We begin with the raw amino-acid sequence, 75 residues long: Small ribosomal subunit protein bS18 (75 aa).

Residues 1–11 (MAAKPFFRRRK) show a composition bias toward basic residues. Positions 1–21 (MAAKPFFRRRKTDPFEGENAP) are disordered.

The protein belongs to the bacterial ribosomal protein bS18 family. In terms of assembly, part of the 30S ribosomal subunit. Forms a tight heterodimer with protein bS6.

Binds as a heterodimer with protein bS6 to the central domain of the 16S rRNA, where it helps stabilize the platform of the 30S subunit. In Jannaschia sp. (strain CCS1), this protein is Small ribosomal subunit protein bS18.